The primary structure comprises 217 residues: Meiotic expression up-regulated protein 29 (217 aa).

The signal sequence occupies residues 1 to 21; the sequence is MFVVKTAVLLFFALFIGNTYA. Residues 22–133 lie on the Extracellular side of the membrane; sequence YTYSLDRIQA…SGVLLHRPWK (112 aa). N-linked (GlcNAc...) asparagine glycosylation occurs at asparagine 84. A helical membrane pass occupies residues 134 to 154; it reads LFSLKPFTAAFVLLLAASYLA. The Cytoplasmic segment spans residues 155–217; the sequence is TACFRMLGYL…VPVPVLDESV (63 aa).

The protein resides in the membrane. This Schizosaccharomyces pombe (strain 972 / ATCC 24843) (Fission yeast) protein is Meiotic expression up-regulated protein 29 (meu29).